A 78-amino-acid polypeptide reads, in one-letter code: Acyl carrier protein (78 aa).

Residues 2-77 form the Carrier domain; the sequence is QNIEKKIKKI…SIFDIIKKYV (76 aa). S37 carries the O-(pantetheine 4'-phosphoryl)serine modification.

This sequence belongs to the acyl carrier protein (ACP) family. In terms of processing, 4'-phosphopantetheine is transferred from CoA to a specific serine of apo-ACP by AcpS. This modification is essential for activity because fatty acids are bound in thioester linkage to the sulfhydryl of the prosthetic group.

It is found in the cytoplasm. It participates in lipid metabolism; fatty acid biosynthesis. Its function is as follows. Carrier of the growing fatty acid chain in fatty acid biosynthesis. In Buchnera aphidicola subsp. Baizongia pistaciae (strain Bp), this protein is Acyl carrier protein.